A 338-amino-acid chain; its full sequence is Biotin synthase (338 aa).

In terms of domain architecture, Radical SAM core spans 59 to 284 (EEVEIEGIVS…RTTLRFAGGR (226 aa)). 3 residues coordinate [4Fe-4S] cluster: Cys74, Cys78, and Cys81. Residues Cys117, Cys209, and Arg279 each coordinate [2Fe-2S] cluster.

The protein belongs to the radical SAM superfamily. Biotin synthase family. Homodimer. Requires [4Fe-4S] cluster as cofactor. [2Fe-2S] cluster serves as cofactor.

The enzyme catalyses (4R,5S)-dethiobiotin + (sulfur carrier)-SH + 2 reduced [2Fe-2S]-[ferredoxin] + 2 S-adenosyl-L-methionine = (sulfur carrier)-H + biotin + 2 5'-deoxyadenosine + 2 L-methionine + 2 oxidized [2Fe-2S]-[ferredoxin]. Its pathway is cofactor biosynthesis; biotin biosynthesis; biotin from 7,8-diaminononanoate: step 2/2. Catalyzes the conversion of dethiobiotin (DTB) to biotin by the insertion of a sulfur atom into dethiobiotin via a radical-based mechanism. In Corynebacterium urealyticum (strain ATCC 43042 / DSM 7109), this protein is Biotin synthase.